A 506-amino-acid chain; its full sequence is MLVVLQIHSSINVKVFASRLRKHFFFTRRKITRIATCLSSSRCPLYPSHWNLCRWNNKQGGTEIGLLIGGLIVFRQTLKSDQETKREQKKRDWILVTAFPSPSCSPCSRETTTFELIMTPFFQSGRVSPDLCFCVNPFQKLQNSQDFCGLLLNFSRFRSKAKGANEKENFREGKDLVGRNRVQGAFQGLYELSHDHGRKDDVLVANLGQPESIRSRLRSYSRSFAHHDLLKQGLSQTILPTTQNKSDNQTEEKKSDSEEEREVSSDAAEKESNSLPSILRLSRSRPQPVSEKHDDIVDESDSASACGVLLEDGTTCTTTPVKGRKRCTEHKGKRLSRVSPGIHIPCEVPTVRECEETENICGVILPDMIRCRSKPVSRRKRCEDHKGMRVNAFFFLLNPTERDKAVNEDKSKPETSTGMNQEGSGLLCEATTKNGLPCTRSAPEGSKRCWQHKDKTLNHGSSENVQSATASQVICGFKLYNGSVCEKSPVKGRKRCEEHKGMRITS.

The region spanning 185 to 225 (AFQGLYELSHDHGRKDDVLVANLGQPESIRSRLRSYSRSFA) is the GIY-YIG domain. A compositionally biased stretch (polar residues) spans 234–247 (LSQTILPTTQNKSD). Residues 234 to 298 (LSQTILPTTQ…VSEKHDDIVD (65 aa)) form a disordered region. Positions 248 to 272 (NQTEEKKSDSEEEREVSSDAAEKES) are enriched in basic and acidic residues. A compositionally biased stretch (low complexity) spans 273 to 288 (NSLPSILRLSRSRPQP). 2 Cx9Cx9RCx2HK repeats span residues 306 to 331 (CGVLLEDGTTCTTTPVKGRKRCTEHK) and 361 to 386 (CGVILPDMIRCRSKPVSRRKRCEDHK). Over residues 404 to 413 (KAVNEDKSKP) the composition is skewed to basic and acidic residues. The disordered stretch occupies residues 404 to 426 (KAVNEDKSKPETSTGMNQEGSGL). The span at 414–423 (ETSTGMNQEG) shows a compositional bias: polar residues. Cx9Cx9RCx2HK repeat units follow at residues 428–453 (CEATTKNGLPCTRSAPEGSKRCWQHK) and 475–500 (CGFKLYNGSVCEKSPVKGRKRCEEHK).

In terms of tissue distribution, expressed in rosette leaves, stipules, stems, flowers, siliques and mature seeds. Expressed in the vascular bundles of xylem in shoot parenchyma cells. Expressed in the remnant cytoplasm of differentiated fiber cells and in protoxylem element of parenchymal cells.

It localises to the cytoplasm. It is found in the nucleus. In terms of biological role, transcriptional regulator involved in the regulation of cell differentiation in meristems. Binds DNA without sequence preference. The polypeptide is Protein EFFECTOR OF TRANSCRIPTION 1 (Arabidopsis thaliana (Mouse-ear cress)).